We begin with the raw amino-acid sequence, 461 residues long: Cysteine--tRNA ligase (461 aa).

A Zn(2+)-binding site is contributed by Cys-28. The 'HIGH' region signature appears at 30-40 (ITIYDLCHIGH). 3 residues coordinate Zn(2+): Cys-209, His-234, and Glu-238. The 'KMSKS' region signature appears at 266 to 270 (KMSKS). Lys-269 contributes to the ATP binding site.

It belongs to the class-I aminoacyl-tRNA synthetase family. In terms of assembly, monomer. Requires Zn(2+) as cofactor.

The protein localises to the cytoplasm. The enzyme catalyses tRNA(Cys) + L-cysteine + ATP = L-cysteinyl-tRNA(Cys) + AMP + diphosphate. The sequence is that of Cysteine--tRNA ligase from Yersinia pseudotuberculosis serotype O:3 (strain YPIII).